Here is a 222-residue protein sequence, read N- to C-terminus: MKKVVAIDGPSGAGKSTVSKEIAKALGFQYLDTGALYRAVAYYFSIKFNYIDDFSLLTEQEIEEELKNIKIHYKNGRVFLSGEDVSDFIRDPKIGEITSQLSTQKVVRDFLMPLQRSFAEKVDIVAEGRDMTTVVFPDAWKKFYLDASPQVRAKRRFEQLIQSGKKISFEEALRDVIERDKRDCSRENAPLRLSKDAFYIDTSELTLQEVISIVLKKVAEDA.

An ATP-binding site is contributed by glycine 9 to threonine 17.

This sequence belongs to the cytidylate kinase family. Type 1 subfamily.

It is found in the cytoplasm. The catalysed reaction is CMP + ATP = CDP + ADP. The enzyme catalyses dCMP + ATP = dCDP + ADP. The sequence is that of Cytidylate kinase from Thermodesulfovibrio yellowstonii (strain ATCC 51303 / DSM 11347 / YP87).